Reading from the N-terminus, the 328-residue chain is Serine protease 48 (328 aa).

A signal peptide spans 1–20 (MGPAGCAFTLLLLLGISVCG). The 240-residue stretch at 28–267 (VVGGQDAAAG…YQKWINATIS (240 aa)) folds into the Peptidase S1 domain. A disulfide bridge links C53 with C69. Residues H68 and D114 each act as charge relay system in the active site. 3 disulfide bridges follow: C148/C226, C181/C205, and C216/C244. S220 acts as the Charge relay system in catalysis. Residue N263 is glycosylated (N-linked (GlcNAc...) asparagine).

Belongs to the peptidase S1 family.

Its subcellular location is the secreted. This chain is Serine protease 48 (PRSS48), found in Homo sapiens (Human).